Here is a 187-residue protein sequence, read N- to C-terminus: Peptidyl-tRNA hydrolase (187 aa).

Position 15 (Tyr15) interacts with tRNA. His20 acts as the Proton acceptor in catalysis. Phe64, Asn66, and Asn112 together coordinate tRNA.

The protein belongs to the PTH family. Monomer.

It localises to the cytoplasm. It carries out the reaction an N-acyl-L-alpha-aminoacyl-tRNA + H2O = an N-acyl-L-amino acid + a tRNA + H(+). Hydrolyzes ribosome-free peptidyl-tRNAs (with 1 or more amino acids incorporated), which drop off the ribosome during protein synthesis, or as a result of ribosome stalling. Functionally, catalyzes the release of premature peptidyl moieties from peptidyl-tRNA molecules trapped in stalled 50S ribosomal subunits, and thus maintains levels of free tRNAs and 50S ribosomes. The chain is Peptidyl-tRNA hydrolase from Parabacteroides distasonis (strain ATCC 8503 / DSM 20701 / CIP 104284 / JCM 5825 / NCTC 11152).